We begin with the raw amino-acid sequence, 92 residues long: Small ribosomal subunit protein uS19 (92 aa).

Belongs to the universal ribosomal protein uS19 family.

Its function is as follows. Protein S19 forms a complex with S13 that binds strongly to the 16S ribosomal RNA. In Roseobacter denitrificans (strain ATCC 33942 / OCh 114) (Erythrobacter sp. (strain OCh 114)), this protein is Small ribosomal subunit protein uS19.